A 307-amino-acid chain; its full sequence is Ribulose bisphosphate carboxylase/oxygenase activase, chloroplastic (307 aa).

The N-terminal 46 residues, 1–46 (MSIPDDKEAGTIDEFLQKEGVLDILQKLDHDLVGLKPVKDRVREIA), are a transit peptide targeting the chloroplast. 73-80 (GSPGTGKT) is an ATP binding site.

The protein belongs to the CbxX/CfxQ family. As to quaternary structure, forms homooligomers. Forms heterohexameric rings with the plastid-encoded Rca subunit consisting of 3 of each nuclear- and plastidial-encoded subunits that alternate in the ring.

Its subcellular location is the plastid. The protein localises to the chloroplast. In terms of biological role, required for the expression of ribulose 1,5-bisphosphate carboxylase/oxygenase (RuBisCo). ATPase involved in the activation of red-type RuBisCo, which tends to form inactive complexes with its substrate ribulose 1,5-bisphosphate (RuBP). Catalyzes the release of RuBP from inhibited RuBisCo in an ATP-dependent manner. Activation of RuBisCO involves the ATP-dependent carboxylation of the epsilon-amino group of lysine leading to a carbamate structure. The nuclear-encoded subunit plays a more critical role in activase function than the plastidial-encoded subunit. This is Ribulose bisphosphate carboxylase/oxygenase activase, chloroplastic from Cyanidioschyzon merolae (strain NIES-3377 / 10D) (Unicellular red alga).